A 75-amino-acid polypeptide reads, in one-letter code: Endogenous retrovirus group K member 7 Np9 protein (75 aa).

The segment at 24 to 43 is disordered; that stretch reads PKRQRPSRTGHDDDGGFVEK. Positions 32–43 are enriched in basic and acidic residues; sequence TGHDDDGGFVEK.

The protein localises to the nucleus. May possess a function in tumorigenesis. In Homo sapiens (Human), this protein is Endogenous retrovirus group K member 7 Np9 protein (ERVK-7).